Reading from the N-terminus, the 528-residue chain is Coiled-coil domain-containing protein 116 (528 aa).

The interval 43–68 (GHVPHPPSTCGSSALQNQRRNKRHPQ) is disordered. Residues 51–60 (TCGSSALQNQ) are compositionally biased toward polar residues. Residues 81–104 (HVLDSLETVVEKATERMAAMKTEA) are a coiled coil. Disordered stretches follow at residues 335-444 (PLFP…RQRA) and 497-528 (SSSP…THHS). Residues 363–378 (PTNSGQPHPTVSSPKT) show a composition bias toward polar residues. The residue at position 389 (S389) is a Phosphoserine. Residues 419–429 (HSREKEPDSDP) show a composition bias toward basic and acidic residues. Over residues 434 to 443 (PPVSLSSRQR) the composition is skewed to polar residues. Low complexity predominate over residues 497–510 (SSSPSSLCPEVTSS).

It localises to the cytoplasm. Its subcellular location is the cytoskeleton. The protein resides in the microtubule organizing center. It is found in the centrosome. This is Coiled-coil domain-containing protein 116 (CCDC116) from Macaca fascicularis (Crab-eating macaque).